The following is a 221-amino-acid chain: Pre-rRNA-processing protein SRD1 (221 aa).

The span at 101-110 (SKNRVTSACN) shows a compositional bias: polar residues. 2 disordered regions span residues 101 to 121 (SKNRVTSACNSERRTTSQEAN) and 137 to 161 (ASITKKYSKKTTSRPKREKRQTILP). The span at 142–155 (KYSKKTTSRPKREK) shows a compositional bias: basic residues. Residues 168–193 (CSKCKDTWTIQWRSGPDQNRELCSPC) form a GATA-type zinc finger. Residues 201–221 (LKKENEKKRQAADKRIDRNNP) form a disordered region. Positions 203-221 (KENEKKRQAADKRIDRNNP) are enriched in basic and acidic residues.

Its subcellular location is the cytoplasm. The protein resides in the nucleus. Its function is as follows. Plays a direct or indirect role in pre-rRNA processing. This chain is Pre-rRNA-processing protein SRD1 (SRD1), found in Saccharomyces cerevisiae (strain ATCC 204508 / S288c) (Baker's yeast).